Consider the following 273-residue polypeptide: MDRYAVFGNPINHSKSPFIHTLFARQTQQLLTYEKIEAPVDDFVGSIRRFFAEGGKGANVTVPFKEQAFQLVDQLSPRAKLAGAVNTLKLTDDGLLLGDNTDGAGLVQDLKYHLEELAGKKILLLGAGGACRGVIGPLLEQRPSEIVIANRTVAKAEQLAQEFAAMGKVRVSQFAELNESFDLIINGTSASLAGAMPDIPDAVIGSATVTYDMMYGSKETVFNLWAKEHGAIKTIDGLGMLVCQAAESFAVWRGIRPGTRQVIRELRRNITGA.

Shikimate-binding positions include 14 to 16 and Thr61; that span reads SKS. Lys65 acts as the Proton acceptor in catalysis. Asn86 and Asp102 together coordinate shikimate. NADP(+)-binding positions include 126-130, 150-155, and Met213; these read GAGGA and NRTVAK. Tyr215 lines the shikimate pocket. Position 237 (Gly237) interacts with NADP(+).

The protein belongs to the shikimate dehydrogenase family. In terms of assembly, homodimer.

It carries out the reaction shikimate + NADP(+) = 3-dehydroshikimate + NADPH + H(+). It functions in the pathway metabolic intermediate biosynthesis; chorismate biosynthesis; chorismate from D-erythrose 4-phosphate and phosphoenolpyruvate: step 4/7. In terms of biological role, involved in the biosynthesis of the chorismate, which leads to the biosynthesis of aromatic amino acids. Catalyzes the reversible NADPH linked reduction of 3-dehydroshikimate (DHSA) to yield shikimate (SA). This Tolumonas auensis (strain DSM 9187 / NBRC 110442 / TA 4) protein is Shikimate dehydrogenase (NADP(+)).